The chain runs to 100 residues: Insertion element IS600 uncharacterized 11 kDa protein (100 aa).

This sequence belongs to the transposase 8 family.

The sequence is that of Insertion element IS600 uncharacterized 11 kDa protein from Shigella sonnei.